Here is a 436-residue protein sequence, read N- to C-terminus: Cyclin-dependent kinase 11B (436 aa).

Positions 25–30 (VKKNRK) match the Nuclear localization signal motif. Positions 30-44 (KKLVKGLHRAGPPPE) are calmodulin-binding. One can recognise a Protein kinase domain in the interval 79-364 (FQCLNRIEEG…AEDGLKHEYF (286 aa)). Residues 85 to 93 (IEEGTYGVV) and lysine 108 each bind ATP. At serine 123 the chain carries Phosphoserine; by CDK7. Threonine 129 is subject to Phosphothreonine; by CDK7. The active-site Proton acceptor is the aspartate 203. Serine 230 carries the post-translational modification Phosphoserine. Position 235 is a phosphotyrosine (tyrosine 235). Phosphothreonine is present on threonine 236. A Glycyl lysine isopeptide (Lys-Gly) (interchain with G-Cter in SUMO2) cross-link involves residue lysine 282. A disordered region spans residues 383–406 (SEQQCVKRGTSPKPPEGGLGYSQL). Threonine 392 carries the post-translational modification Phosphothreonine. Position 393 is a phosphoserine (serine 393).

The protein belongs to the protein kinase superfamily. CMGC Ser/Thr protein kinase family. CDC2/CDKX subfamily. May interact PAK1 and RANBP9. p110C interacts with RNPS1. Interacts with CCND3. Interacts with CCNL1 and CCNL2. Forms complexes with pre-mRNA-splicing factors, including at least SRSF1, SRSF2 AND SRSF7/SLU7. Requires Mg(2+) as cofactor.

It is found in the cytoplasm. Its subcellular location is the nucleus membrane. It localises to the endomembrane system. The protein localises to the perinuclear region. The catalysed reaction is L-seryl-[protein] + ATP = O-phospho-L-seryl-[protein] + ADP + H(+). It carries out the reaction L-threonyl-[protein] + ATP = O-phospho-L-threonyl-[protein] + ADP + H(+). In terms of biological role, plays multiple roles in cell cycle progression, cytokinesis and apoptosis. Involved in pre-mRNA splicing in a kinase activity-dependent manner. May act as a negative regulator of normal cell cycle progression. This is Cyclin-dependent kinase 11B (Cdk11b) from Rattus norvegicus (Rat).